The following is a 935-amino-acid chain: MAYGEPYYSSKPDKDFNFGSTMARRQMTPTMVTKLPKFVRNSPQAYDWIVRGLIFPTIGKTYFQRVVVITGGLEDGTYGSFAFDGKEWVGIYPIEHLNLMSSLKLIHKANALQERLRLSQEEKATLALDVQFLQHENVRLKEMIPKPEPRKIQMKWIIMGAVLTFLSLIPGGYAHSQTNNTIFTDMIAACKYSTETLTENLDLRIKLALANITISDKLDAVRQILNFAFVPRAHWLRTVFYYIHYYEMWNIFMFVLAIGTVMRSARPGTDLVTLATSHLSGFRMAVLPTIPFHTTMTLWVMNTLMVCYYFDNLLAITLAILAPILGIIFLCFMEDSNYVSQIRGLIATAVLIAGGHACLTLTGTTTSLFVVILTCRFIRMATVFIGTRFEIRDANGKVVATVPTRIKNVAFDFFQKLKQSGVRVGVNEFVVIKPGALCVIDTPEGKGTGFFSGNDIVTAAHVVGNNTFVNVCYEGLMYEAKVRYMPEKDIAFLTCPGDLHPTARLKLSKNPDYSCVTVMAYVNEDLVVSTAAAMVHGNTLSYAVRTQDGMSGAPVCDKYGRVLAVHQTNTGYTGGAVIIDPADFHPVKAPSQVELLKEEIERLKAQLNSATENATTVVTQQPSAALEQKSVSDSDVVDLVRTAMEREMKVLRDEINGILAPFLQKKKGKTKHGRGRVRRNLRKGVKLLTEEEYRELLEKGLDRETFLDLIDRIIGERSGYPDYDDEDYYDEDDDGWGMVGDDVEFDYTEVINFDQAKPIPAPRTTKQKICPEPEVESQPLDLSQKKEKQSEYEQQVVKSTKPQQLEHEQQVVKPIKPQKSEPQPYSQTYGKAPIWESYDFDWDEDDAKFILPAPHRLTKADEIVLGSKIVKLRTIIETAIKTQNYSALPEAVFELDKAAYEAGLEGFLQRVKSKNKAPKNYKGPQKTKGPKTTTH.

The stretch at 104–142 (KLIHKANALQERLRLSQEEKATLALDVQFLQHENVRLKE) forms a coiled coil. The next 4 helical transmembrane spans lie at 239–259 (VFYY…LAIG), 286–306 (VLPT…TLMV), 313–333 (LLAI…LCFM), and 344–364 (GLIA…LTGT). Catalysis depends on charge relay system; for serine protease activity residues H461, D489, and S551. Residues 587–620 (VKAPSQVELLKEEIERLKAQLNSATENATTVVTQ) are a coiled coil. Y693 carries the O-(5'-phospho-RNA)-tyrosine modification. 2 disordered regions span residues 756–828 (AKPI…YSQT) and 915–935 (NKAP…TTTH). Low complexity predominate over residues 922 to 935 (KGPQKTKGPKTTTH).

It belongs to the astroviridae polyprotein 1A family. As to quaternary structure, monomer. Cleaved by the viral and host proteases. The protease is probably autocatalytically cleaved.

The protein resides in the host membrane. The enzyme catalyses RNA(n) + a ribonucleoside 5'-triphosphate = RNA(n+1) + diphosphate. Responsible for the cleavage of the polyprotein into functional products. Functionally, protein covalently attached to the 5' extremity of the genomic and subgenomic RNAs. It may serve as a primer for the replicase. The chain is Non-structural polyprotein 1A (ORF1) from Human astrovirus-1 (HAstV-1).